A 391-amino-acid polypeptide reads, in one-letter code: Protein NirF (391 aa).

The protein resides in the cytoplasm. In terms of biological role, required for the biosynthesis of heme d1 of nitrite reductase. Could have a dehydrogenase activity yielding sirohydrochlorin from precorrin-2 or dehydrogenation of propionate side chain C17. This Stutzerimonas stutzeri (Pseudomonas stutzeri) protein is Protein NirF (nirF).